We begin with the raw amino-acid sequence, 152 residues long: Probable spermine N(1)-acetyltransferase (152 aa).

An N-acetyltransferase domain is found at 3–152 (INIKAVTDDN…NGEKVMVKEL (150 aa)). Acetyl-CoA-binding positions include 82 to 84 (FFI), 89 to 95 (QGKGLGK), and 122 to 131 (NIHAIRLYQR). Tyr-129 functions as the Proton donor in the catalytic mechanism.

It belongs to the acetyltransferase family.

It carries out the reaction an alkane-alpha,omega-diamine + acetyl-CoA = an N-acetylalkane-alpha,omega-diamine + CoA + H(+). The catalysed reaction is spermine + acetyl-CoA = N(1)-acetylspermine + CoA + H(+). It participates in amine and polyamine degradation; spermine degradation. In terms of biological role, probably acetylates spermine to N(1)-acetylspermine. The protein is Probable spermine N(1)-acetyltransferase of Bacillus subtilis subsp. natto (strain BEST195).